The sequence spans 116 residues: Biogenesis of lysosome-related organelles complex 1 subunit CNL1 (116 aa).

Residues 63–95 are a coiled coil; the sequence is DIVDVNIQSFKDILSKCEELENYFTMLDQIEMI.

This sequence belongs to the BLOC1S4 family. Component of the biogenesis of lysosome-related organelles complex-1 (BLOC-1).

It is found in the cytoplasm. Functionally, component of the biogenesis of lysosome-related organelles complex-1 (BLOC-1), a complex that is involved in endosomal cargo sorting. The sequence is that of Biogenesis of lysosome-related organelles complex 1 subunit CNL1 (CLN1) from Vanderwaltozyma polyspora (strain ATCC 22028 / DSM 70294 / BCRC 21397 / CBS 2163 / NBRC 10782 / NRRL Y-8283 / UCD 57-17) (Kluyveromyces polysporus).